A 1444-amino-acid polypeptide reads, in one-letter code: Protein shortage in chiasmata 1 ortholog (1444 aa).

Low complexity predominate over residues 1106-1117 (SITKSPQISSPQ). The segment at 1106 to 1129 (SITKSPQISSPQENRNQISTLSSQ) is disordered.

It belongs to the XPF family. Highly divergent. Interacts with TEX11. Interacts with SPO16.

The protein localises to the chromosome. Functionally, ATPase required during meiosis for the formation of crossover recombination intermediates. Binds DNA: preferentially binds to single-stranded DNA and DNA branched structures. Does not show nuclease activity in vitro, but shows ATPase activity, which is stimulated by the presence of single-stranded DNA. Plays a key role in homologous recombination and crossing-over in meiotic prophase I in male and female germ cells. Required for proper synaptonemal complex assembly and homologous chromosome pairing. Requiref for recruitment TEX11 and MSH4 to recombination intermediates. In Homo sapiens (Human), this protein is Protein shortage in chiasmata 1 ortholog.